The chain runs to 467 residues: Nuclear distribution protein PAC1 (467 aa).

Positions 62–96 (GSIIRLQRAITKLEQKCDALQQELDDKTKQLETIV) form a coiled coil. 7 WD repeats span residues 121–160 (QNESPVTAIKLHPSLAIVYVGTDTGRLIAYDILNYTIPLA), 164–212 (AHSK…GELK), 219–262 (AHDS…QSFS), 264–302 (HSEWVKSIDVLDEYILSGSLDSTLRLTHWPSGNGLSVGT), 325–365 (PYRD…LKPN), 385–424 (GHTSWVKDLKLRGDHLFSCSDDETIKCWDLNTGNCVKTWS), and 426–466 (IHNN…VKII).

Belongs to the WD repeat LIS1/nudF family. Self-associates. Interacts with NDL1 and dynein.

The protein localises to the cytoplasm. The protein resides in the cytoskeleton. Its subcellular location is the spindle pole. Functionally, positively regulates the activity of the minus-end directed microtubule motor protein dynein. Plays a central role in positioning the mitotic spindle at the bud neck during cell division. Targets cytoplasmic dynein to microtubule plus ends, thereby promoting dynein-mediated microtubule sliding along the bud cortex and consequently the movement of the mitotic spindle to the bud neck. In Candida glabrata (strain ATCC 2001 / BCRC 20586 / JCM 3761 / NBRC 0622 / NRRL Y-65 / CBS 138) (Yeast), this protein is Nuclear distribution protein PAC1.